A 159-amino-acid polypeptide reads, in one-letter code: uncharacterized protein (159 aa).

Residues histidine 44, histidine 124, and histidine 128 each coordinate a divalent metal cation.

It belongs to the DinB family.

This is an uncharacterized protein from Bacillus subtilis (strain 168).